A 115-amino-acid chain; its full sequence is Large ribosomal subunit protein bL19 (115 aa).

Belongs to the bacterial ribosomal protein bL19 family.

Its function is as follows. This protein is located at the 30S-50S ribosomal subunit interface and may play a role in the structure and function of the aminoacyl-tRNA binding site. This is Large ribosomal subunit protein bL19 (rplS) from Thermotoga maritima (strain ATCC 43589 / DSM 3109 / JCM 10099 / NBRC 100826 / MSB8).